We begin with the raw amino-acid sequence, 1026 residues long: Exportin-T (1026 aa).

It belongs to the exportin family.

The protein resides in the nucleus. It is found in the cytoplasm. In terms of biological role, tRNA nucleus export receptor which facilitates tRNA translocation across the nuclear pore complex. Involved in pre-tRNA splicing, probably by affecting the interaction of pre-tRNA with splicing endonuclease. The chain is Exportin-T (los1) from Aspergillus oryzae (strain ATCC 42149 / RIB 40) (Yellow koji mold).